The following is a 209-amino-acid chain: FMN-dependent NADH:quinone oxidoreductase (209 aa).

Residues Ser-9, Ser-19 to Ser-21, and Thr-143 to Gly-146 each bind FMN.

Belongs to the azoreductase type 1 family. As to quaternary structure, homodimer. FMN serves as cofactor.

The enzyme catalyses 2 a quinone + NADH + H(+) = 2 a 1,4-benzosemiquinone + NAD(+). The catalysed reaction is N,N-dimethyl-1,4-phenylenediamine + anthranilate + 2 NAD(+) = 2-(4-dimethylaminophenyl)diazenylbenzoate + 2 NADH + 2 H(+). Functionally, quinone reductase that provides resistance to thiol-specific stress caused by electrophilic quinones. Also exhibits azoreductase activity. Catalyzes the reductive cleavage of the azo bond in aromatic azo compounds to the corresponding amines. The polypeptide is FMN-dependent NADH:quinone oxidoreductase (Leptothrix cholodnii (strain ATCC 51168 / LMG 8142 / SP-6) (Leptothrix discophora (strain SP-6))).